A 310-amino-acid chain; its full sequence is Aspartate carbamoyltransferase catalytic subunit (310 aa).

Residues Arg58 and Thr59 each coordinate carbamoyl phosphate. L-aspartate is bound at residue Lys87. Residues Arg108, His136, and Gln139 each contribute to the carbamoyl phosphate site. Positions 169 and 229 each coordinate L-aspartate. Residues Leu268 and Pro269 each coordinate carbamoyl phosphate.

It belongs to the aspartate/ornithine carbamoyltransferase superfamily. ATCase family. As to quaternary structure, heterododecamer (2C3:3R2) of six catalytic PyrB chains organized as two trimers (C3), and six regulatory PyrI chains organized as three dimers (R2).

The catalysed reaction is carbamoyl phosphate + L-aspartate = N-carbamoyl-L-aspartate + phosphate + H(+). Its pathway is pyrimidine metabolism; UMP biosynthesis via de novo pathway; (S)-dihydroorotate from bicarbonate: step 2/3. In terms of biological role, catalyzes the condensation of carbamoyl phosphate and aspartate to form carbamoyl aspartate and inorganic phosphate, the committed step in the de novo pyrimidine nucleotide biosynthesis pathway. In Leptospira biflexa serovar Patoc (strain Patoc 1 / Ames), this protein is Aspartate carbamoyltransferase catalytic subunit.